A 652-amino-acid chain; its full sequence is Acetyl-coenzyme A synthetase (652 aa).

CoA contacts are provided by residues 191–194 (RAGR), threonine 311, and asparagine 335. Residues 387-389 (GEP), 411-416 (DTWWQT), aspartate 500, and arginine 515 contribute to the ATP site. Position 523 (serine 523) interacts with CoA. An ATP-binding site is contributed by arginine 526. Valine 537, histidine 539, and isoleucine 542 together coordinate Mg(2+). Residue arginine 584 coordinates CoA. Position 609 is an N6-acetyllysine (lysine 609).

It belongs to the ATP-dependent AMP-binding enzyme family. It depends on Mg(2+) as a cofactor. Post-translationally, acetylated. Deacetylation by the SIR2-homolog deacetylase activates the enzyme.

It carries out the reaction acetate + ATP + CoA = acetyl-CoA + AMP + diphosphate. In terms of biological role, catalyzes the conversion of acetate into acetyl-CoA (AcCoA), an essential intermediate at the junction of anabolic and catabolic pathways. Acs undergoes a two-step reaction. In the first half reaction, Acs combines acetate with ATP to form acetyl-adenylate (AcAMP) intermediate. In the second half reaction, it can then transfer the acetyl group from AcAMP to the sulfhydryl group of CoA, forming the product AcCoA. Its function is as follows. Enables the cell to use acetate during aerobic growth to generate energy via the TCA cycle, and biosynthetic compounds via the glyoxylate shunt. Acetylates CheY, the response regulator involved in flagellar movement and chemotaxis. The sequence is that of Acetyl-coenzyme A synthetase from Yersinia pestis.